Here is a 1214-residue protein sequence, read N- to C-terminus: Sodium bicarbonate cotransporter 3 (1214 aa).

A compositionally biased stretch (basic and acidic residues) spans 1 to 12; sequence MERFRLEKKLPG. 2 disordered regions span residues 1-22 and 52-93; these read MERF…VDLG and SKES…PSQR. Over 1-608 the chain is Extracellular; that stretch reads MERFRLEKKL…DFKDALSLQC (608 aa). A phosphoserine mark is found at S52, S55, S84, S150, L165, and C168. Over residues 55–72 the composition is skewed to basic residues; that stretch reads SRRRHRHRGHKHHHRRRK. Positions 73-85 are enriched in basic and acidic residues; that stretch reads DKESDKEDGRESP. N171 carries N-linked (GlcNAc...) asparagine glycosylation. Phosphoserine occurs at positions 233, 242, 255, 258, 260, 263, 264, and 267. N-linked (GlcNAc...) asparagine glycosylation occurs at N269. Disordered stretches follow at residues 289–346, 362–408, and 552–572; these read SRAG…IPTV, EEQK…ENST, and FHNG…HHAG. A compositionally biased stretch (pro residues) spans 303 to 313; that stretch reads VPTPQNSPPSS. A compositionally biased stretch (low complexity) spans 314-332; that stretch reads PSISRLTSRSSQESQRQAP. A compositionally biased stretch (polar residues) spans 379-392; sequence SPQSAPGNLDNSKS. S382 carries the phosphoserine modification. N398 carries N-linked (GlcNAc...) asparagine glycosylation. A phosphoserine mark is found at S400 and S403. N406 carries an N-linked (GlcNAc...) asparagine glycan. Phosphoserine occurs at positions 407 and 556. Phosphothreonine is present on T557. The segment covering 563–572 has biased composition (basic and acidic residues); the sequence is TPKEAAHHAG. Residues 609–629 traverse the membrane as a helical segment; it reads LASILFLYCACMSPVITFGGL. Residues 630-637 are Cytoplasmic-facing; that stretch reads LGEATEGR. A helical transmembrane segment spans residues 638–658; sequence ISAIESLFGASLTGIAYSLFA. At 659 to 695 the chain is on the extracellular side; sequence GQPLTILGSTGPVLVFEKILYKFCRDYQLSYLSLRTS. Residues 696-716 traverse the membrane as a helical segment; that stretch reads IGLWTSFLCIVLVATDASSLV. Residues 717–725 are Cytoplasmic-facing; that stretch reads CYITRFTEE. Residues 726–746 traverse the membrane as a helical segment; that stretch reads AFAALICIIFIYEALEKLFDL. Position 742 is a phosphoserine (K742). The Extracellular segment spans residues 747–817; that stretch reads GETYAFNMHN…VFLGSACGHH (71 aa). C766 and C768 are oxidised to a cystine. P771 and P774 each carry phosphoserine. A glycan (N-linked (GlcNAc...) asparagine) is linked at N776. A780 carries the phosphoserine modification. Residues N786 and N791 are each glycosylated (N-linked (GlcNAc...) asparagine). Residues C802 and C814 are joined by a disulfide bond. Residues 818 to 838 form a helical membrane-spanning segment; it reads GPYIPDVLFWCVILFFTTFFL. The Cytoplasmic segment spans residues 839-861; the sequence is SSFLKQFKTKRYFPTKVRSTISD. Residues 862–882 traverse the membrane as a helical segment; it reads FAVFLTIVIMVTIDYLVGVPS. At 883–908 the chain is on the extracellular side; that stretch reads PKLHVPEKFEPTHPERGWIISPLGDN. Residues 909–929 traverse the membrane as a helical segment; it reads PWWTLLIAAIPALLCTILIFM. Residues 930–954 are Cytoplasmic-facing; the sequence is DQQITAVIINRKEHKLKKGAGYHLD. Residues 955 to 975 form a helical membrane-spanning segment; the sequence is LLMVGVMLGVCSVMGLPWFVA. At 976–1011 the chain is on the extracellular side; sequence ATVLSISHVNSLKVESECSAPGEQPKFLGIREQRVT. Phosphoserine is present on residues E1007, V1010, and F1016. Essential for cell membrane localization and transport activity regions lie at residues 1008 to 1131 and 1127 to 1214; these read QRVT…KREL and TKRE…ETSL. Residues 1012-1032 traverse the membrane as a helical segment; that stretch reads GLMIFILMGLSVFMTSVLKFI. The Cytoplasmic segment spans residues 1033–1034; it reads PM. The chain crosses the membrane as a helical span at residues 1035–1055; sequence PVLYGVFLYMGVSSLKGIQLF. Residues 1056–1092 lie on the Extracellular side of the membrane; that stretch reads DRIKLFGMPAKHQPDLIYLRYVPLWKVHIFTVIQLTC. Phosphoserine is present on residues Y1073, V1077, S1102, A1105, V1106, P1109, M1111, and L1115. A helical transmembrane segment spans residues 1093–1113; sequence LVLLWVIKVSAAAVVFPMMVL. At 1114–1214 the chain is on the cytoplasmic side; the sequence is ALVFVRKLMD…KKYVDAETSL (101 aa). The interval 1134-1136 is CA2-binding; the sequence is LDD. Basic and acidic residues predominate over residues 1144–1162; the sequence is KKEDDKKKKEKEEAERMLQ. The segment at 1144 to 1169 is disordered; that stretch reads KKEDDKKKKEKEEAERMLQDDDDTVH. The residue at position 1167 (T1167) is a Phosphothreonine. S1176, S1188, D1201, and S1213 each carry phosphoserine. A PDZ-binding motif is present at residues 1211–1214; the sequence is ETSL.

It belongs to the anion exchanger (TC 2.A.31) family. As to quaternary structure, interacts with CFTR through NHERF1/EBP50. Interacts with USH1C. Forms a complex with ATP6V1B1 and NHERF1/EBP50. Interacts in a pH dependent-manner with CA2/carbonic anhydrase 2. As to expression, highly expressed in testis and spleen. Also expressed in retina, colon, small intestine, ovary, thymus, prostate, muscle, heart and kidney. In terms of tissue distribution, expressed in skeletal muscle and heart muscle.

The protein localises to the basolateral cell membrane. The protein resides in the apical cell membrane. It is found in the cell projection. It localises to the stereocilium. Its subcellular location is the cell membrane. The catalysed reaction is hydrogencarbonate(in) + Na(+)(in) = hydrogencarbonate(out) + Na(+)(out). Its activity is regulated as follows. Transporter activity is regulated by CA2/carbonic anhydrase 2, cAMP and PKA. Insensitive to stilbene derivatives. Inhibited by 5-(N-ethyl-N-isopropyl)-amiloride (EIPA). Functionally, electroneutral sodium- and bicarbonate-dependent cotransporter with a Na(+):HCO3(-) 1:1 stoichiometry. Mediates the sodium-dependent bicarbonate transport important for pH recovery after acid load as well as for regulation of steady-state pH in the duodenum and vascular smooth muscle cells. Plays a key role in macrophage acidification, mediating bicarbonate import into the cytoplasm which is crucial for net acid extrusion and maintenance of cytoplasmic pH during phagocytosis. Provides cellular bicarbonate for de novo purine and pyrimidine synthesis and is a key mediator of de novo nucleotide synthesis downstream of mTORC1 signaling in proliferating cells. In terms of biological role, plays a key role in macrophage acidification, mediating bicarbonate import into the cytoplasm which is crucial for net acid extrusion and maintenance of cytoplasmic pH during phagocytosis. In Homo sapiens (Human), this protein is Sodium bicarbonate cotransporter 3 (SLC4A7).